Reading from the N-terminus, the 519-residue chain is Lysine 5,6-aminomutase alpha subunit (519 aa).

57-59 provides a ligand contact to adenosylcob(III)alamin; it reads DEV. Residues 187-192, S241, Y266, R271, and N302 contribute to the pyridoxal 5'-phosphate site; that span reads RTTGQS.

The protein belongs to the KamD family. In terms of assembly, heterotetramer of 2 alpha and 2 beta subunits. Requires adenosylcob(III)alamin as cofactor. Pyridoxal 5'-phosphate serves as cofactor.

The catalysed reaction is (3S)-3,6-diaminohexanoate = (3S,5S)-3,5-diaminohexanoate. It catalyses the reaction D-lysine = (2R,5S)-2,5-diaminohexanoate. It functions in the pathway amino-acid metabolism; lysine degradation. Rapidly inactivated in the presence of D-lysine and to a lesser extent in the absence of adenosylcobalamin (Adocbl). Activity is stable in the presence of Adocbl when D-lysine is absent. Adocbl imparts thermal stability at 37 degrees Celsius. Its function is as follows. Catalyzes the migration of the L-beta-lysine and D-lysine epsilon amino group to the delta carbon to produce 3,5-diaminohexanoate and 2,5-diaminohexanoate, respectively. The chain is Lysine 5,6-aminomutase alpha subunit (kamD) from Acetoanaerobium sticklandii (strain ATCC 12662 / DSM 519 / JCM 1433 / CCUG 9281 / NCIMB 10654 / HF) (Clostridium sticklandii).